The primary structure comprises 192 residues: Large ribosomal subunit protein uL5 (192 aa).

Belongs to the universal ribosomal protein uL5 family. In terms of assembly, part of the 50S ribosomal subunit; part of the 5S rRNA/L5/L18/L25 subcomplex. Contacts the 5S rRNA and the P site tRNA. Forms a bridge to the 30S subunit in the 70S ribosome.

Functionally, this is one of the proteins that bind and probably mediate the attachment of the 5S RNA into the large ribosomal subunit, where it forms part of the central protuberance. In the 70S ribosome it contacts protein S13 of the 30S subunit (bridge B1b), connecting the 2 subunits; this bridge is implicated in subunit movement. Contacts the P site tRNA; the 5S rRNA and some of its associated proteins might help stabilize positioning of ribosome-bound tRNAs. The protein is Large ribosomal subunit protein uL5 of Sphingopyxis alaskensis (strain DSM 13593 / LMG 18877 / RB2256) (Sphingomonas alaskensis).